The chain runs to 382 residues: MKLKRQKPKEKFSYDPQKVLKKLEDLAWKILEEVKSGKNPYFDVPTRGLNNVYFDEEARLIKLGDKLSRRYFLNVAHARKFTQTLILMAYIKRLVSEGKHASLREAYYANKHTIPGTRENTFEDQSESDPIIEDLERMLGVLREEMHITADRRGYIYGDIVIKDGEDEFNASKLGTGGWAVPGTVEHIQFPEVNVDYVLVVETAAMADRLIEEKYPKKENCLIVATQGQASRGVRRLIHRLHYEEGLPIIVFTDGDPYGWYIYSTIKQGSINLAYLSEKLATPDAKFVGMTMDDIKEYNLEHVTEKLKGIPPDKKGGPTGDYKRLIEELNYPWFQNKEWQRQLKLALKWGVRIEQQALANKSLEFVAKEYLPEKIREGKLLP.

In terms of domain architecture, Topo IIA-type catalytic spans 14-155 (YDPQKVLKKL…MHITADRRGY (142 aa)). Tyr-108 functions as the O-(5'-phospho-DNA)-tyrosine intermediate in the catalytic mechanism. Residues Glu-202 and Asp-254 each coordinate Mg(2+).

It belongs to the TOP6A family. As to quaternary structure, homodimer. Heterotetramer of two Top6A and two Top6B chains. It depends on Mg(2+) as a cofactor.

It catalyses the reaction ATP-dependent breakage, passage and rejoining of double-stranded DNA.. Relaxes both positive and negative superturns and exhibits a strong decatenase activity. In Pyrococcus abyssi (strain GE5 / Orsay), this protein is Type 2 DNA topoisomerase 6 subunit A.